We begin with the raw amino-acid sequence, 345 residues long: Uroporphyrinogen decarboxylase (345 aa).

Residues 26–30 (RQAGR), F45, D75, Y151, S206, and H320 each bind substrate.

It belongs to the uroporphyrinogen decarboxylase family. In terms of assembly, homodimer.

The protein resides in the cytoplasm. It catalyses the reaction uroporphyrinogen III + 4 H(+) = coproporphyrinogen III + 4 CO2. It functions in the pathway porphyrin-containing compound metabolism; protoporphyrin-IX biosynthesis; coproporphyrinogen-III from 5-aminolevulinate: step 4/4. Functionally, catalyzes the decarboxylation of four acetate groups of uroporphyrinogen-III to yield coproporphyrinogen-III. This Staphylococcus carnosus (strain TM300) protein is Uroporphyrinogen decarboxylase.